The following is a 537-amino-acid chain: Cytoplasmic 60S subunit biogenesis factor REI1 homolog (537 aa).

C2H2-type zinc fingers lie at residues 18-42 and 83-107; these read YTCN…SDWH and KTCE…STKH. Disordered stretches follow at residues 101 to 151 and 163 to 204; these read HLSS…AEEE and SIHD…PEAL. Residues 192 to 204 are compositionally biased toward low complexity; that stretch reads EETPTTTPKPEAL. The C2H2-type 3 zinc finger occupies 260–284; that stretch reads NECLTCGKMKVNVFAIQTHMRDKSH. Acidic residues predominate over residues 312-322; sequence DWETEEEDKGE. 2 disordered regions span residues 312–361 and 382–401; these read DWET…ASSL and GKHP…ADGI. A compositionally biased stretch (basic and acidic residues) spans 323–339; that stretch reads EDGGVRLGAKRESKVVD. Residues 340 to 356 are compositionally biased toward acidic residues; the sequence is ENGDEVMEDEEGWETDS. Residues 383–395 show a composition bias toward basic residues; sequence KHPHHSRENKKAH.

Belongs to the REI1 family. Associates with nascent pre-60S particles that have not yet entered the translating pool, and is released from mature 60S subunits.

It localises to the cytoplasm. Pre-60S-associated factor involved in the cytoplasmic maturation of the 60S subunit. Involved in the dissociation and recycling of other late pre-60S factors before newly synthesized large ribosomal subunits enter translation. The chain is Cytoplasmic 60S subunit biogenesis factor REI1 homolog from Chaetomium thermophilum (strain DSM 1495 / CBS 144.50 / IMI 039719) (Thermochaetoides thermophila).